Consider the following 534-residue polypeptide: Protein BFR2 (534 aa).

Residues 27 to 148 form a disordered region; the sequence is ENASLFQHNE…ETEEAQQKRH (122 aa). A phosphoserine mark is found at S41 and S44. Basic and acidic residues predominate over residues 52-77; sequence EETKKAHYLEVEKSKLRAEKGLELND. The stretch at 86 to 161 forms a coiled coil; the sequence is SRQALYEEVS…KLIQQETKQA (76 aa). 2 stretches are compositionally biased toward acidic residues: residues 93-114 and 121-142; these read EVSE…EEDA and SEDE…ETEE. A phosphoserine mark is found at S366, S372, and S379.

The protein belongs to the AATF family.

It is found in the nucleus. The protein resides in the nucleolus. In terms of biological role, involved in endoplasmic reticulum to Golgi transport. Involved in a protein-transport step blocked by brefeldin A, which disrupts the Golgi apparatus and its incoming protein flux. May also be involved for mass growth or cell proliferation. This is Protein BFR2 (BFR2) from Saccharomyces cerevisiae (strain ATCC 204508 / S288c) (Baker's yeast).